Reading from the N-terminus, the 555-residue chain is Glucose-6-phosphate isomerase (555 aa).

E365 acts as the Proton donor in catalysis. Catalysis depends on residues H396 and K522.

The protein belongs to the GPI family.

It localises to the cytoplasm. The catalysed reaction is alpha-D-glucose 6-phosphate = beta-D-fructose 6-phosphate. The protein operates within carbohydrate biosynthesis; gluconeogenesis. It functions in the pathway carbohydrate degradation; glycolysis; D-glyceraldehyde 3-phosphate and glycerone phosphate from D-glucose: step 2/4. Functionally, catalyzes the reversible isomerization of glucose-6-phosphate to fructose-6-phosphate. This is Glucose-6-phosphate isomerase from Psychrobacter arcticus (strain DSM 17307 / VKM B-2377 / 273-4).